Reading from the N-terminus, the 160-residue chain is uncharacterized protein (160 aa).

The protein resides in the mitochondrion. This is an uncharacterized protein from Arabidopsis thaliana (Mouse-ear cress).